Consider the following 149-residue polypeptide: UPF0178 protein lwe1471 (149 aa).

The protein belongs to the UPF0178 family.

The protein is UPF0178 protein lwe1471 of Listeria welshimeri serovar 6b (strain ATCC 35897 / DSM 20650 / CCUG 15529 / CIP 8149 / NCTC 11857 / SLCC 5334 / V8).